A 140-amino-acid polypeptide reads, in one-letter code: MDCNIVLLLRNNTMENNTKNYLEFIIEKNKVNFFKQMIEIVCVEQSCKIFFDSSNISNNGACIITFIPCSSSGELNNNMMFRLKKLGYFFCKVPKTTIIVDSELLSKCFRRLSTNDDAIVYIKDTGQLFVYNLDNNNNQY.

This is an uncharacterized protein from Acanthamoeba polyphaga mimivirus (APMV).